The following is a 470-amino-acid chain: Origin of replication complex subunit 4 (470 aa).

Residue 63 to 70 (GPRGCGKA) participates in ATP binding.

Belongs to the ORC4 family. As to quaternary structure, component of the origin recognition complex (ORC) composed of at least ORC1, ORC2, ORC3, ORC4, ORC5 and ORC6. ORC is regulated in a cell-cycle and development dependent manner. It is sequentially assembled at the exit from anaphase of mitosis and disassembled as cells enter S phase. Expressed in the shoot apical meristem (SAM), leaves, ears and roots (including root tips).

The protein resides in the nucleus. In terms of biological role, component of the origin recognition complex (ORC) that binds origins of replication. DNA-binding is ATP-dependent. The specific DNA sequences that define origins of replication have not been identified yet. ORC is required to assemble the pre-replication complex necessary to initiate DNA replication. The protein is Origin of replication complex subunit 4 of Oryza sativa subsp. japonica (Rice).